A 618-amino-acid polypeptide reads, in one-letter code: Indolepyruvate oxidoreductase subunit IorA (618 aa).

4Fe-4S ferredoxin-type domains lie at 559-590 (RPVR…DGRV) and 588-617 (GRVF…PEGK). Cys-568, Cys-571, Cys-574, Cys-580, Cys-597, Cys-600, Cys-603, and Cys-607 together coordinate [4Fe-4S] cluster.

In terms of assembly, heterodimer of the IorA and IorB subunits. [4Fe-4S] cluster is required as a cofactor.

The catalysed reaction is indole-3-pyruvate + 2 oxidized [2Fe-2S]-[ferredoxin] + CoA = (indol-3-yl)acetyl-CoA + 2 reduced [2Fe-2S]-[ferredoxin] + CO2 + H(+). Catalyzes the ferredoxin-dependent oxidative decarboxylation of arylpyruvates. The protein is Indolepyruvate oxidoreductase subunit IorA (iorA) of Methanothermobacter marburgensis (strain ATCC BAA-927 / DSM 2133 / JCM 14651 / NBRC 100331 / OCM 82 / Marburg) (Methanobacterium thermoautotrophicum).